We begin with the raw amino-acid sequence, 485 residues long: Aspartyl/glutamyl-tRNA(Asn/Gln) amidotransferase subunit B (485 aa).

Belongs to the GatB/GatE family. GatB subfamily. As to quaternary structure, heterotrimer of A, B and C subunits.

It carries out the reaction L-glutamyl-tRNA(Gln) + L-glutamine + ATP + H2O = L-glutaminyl-tRNA(Gln) + L-glutamate + ADP + phosphate + H(+). The catalysed reaction is L-aspartyl-tRNA(Asn) + L-glutamine + ATP + H2O = L-asparaginyl-tRNA(Asn) + L-glutamate + ADP + phosphate + 2 H(+). Allows the formation of correctly charged Asn-tRNA(Asn) or Gln-tRNA(Gln) through the transamidation of misacylated Asp-tRNA(Asn) or Glu-tRNA(Gln) in organisms which lack either or both of asparaginyl-tRNA or glutaminyl-tRNA synthetases. The reaction takes place in the presence of glutamine and ATP through an activated phospho-Asp-tRNA(Asn) or phospho-Glu-tRNA(Gln). This chain is Aspartyl/glutamyl-tRNA(Asn/Gln) amidotransferase subunit B, found in Rhodospirillum rubrum (strain ATCC 11170 / ATH 1.1.1 / DSM 467 / LMG 4362 / NCIMB 8255 / S1).